The following is a 379-amino-acid chain: Putative glutamate--cysteine ligase 2 (379 aa).

The protein belongs to the glutamate--cysteine ligase type 2 family. YbdK subfamily.

The enzyme catalyses L-cysteine + L-glutamate + ATP = gamma-L-glutamyl-L-cysteine + ADP + phosphate + H(+). Functionally, ATP-dependent carboxylate-amine ligase which exhibits weak glutamate--cysteine ligase activity. This is Putative glutamate--cysteine ligase 2 from Mycobacterium avium (strain 104).